We begin with the raw amino-acid sequence, 674 residues long: Protein asunder (674 aa).

The stretch at His516–Ser538 forms a coiled coil. The Nuclear localization signal (NLS) motif lies at Leu601 to Arg607.

Belongs to the Integrator subunit 13 family. In terms of assembly, belongs to the multiprotein complex Integrator, at least composed of IntS1, IntS2, IntS3, IntS4, omd/IntS5, IntS6, defl/IntS7, IntS8, IntS9, IntS10, IntS11, IntS12, asun/IntS13, IntS14 and IntS15. The core complex associates with protein phosphatase 2A subunits mts/PP2A and Pp2A-29B, to form the Integrator-PP2A (INTAC) complex. Post-translationally, phosphorylated.

It is found in the nucleus. The protein resides in the cytoplasm. The protein localises to the perinuclear region. In terms of biological role, component of the integrator complex, a multiprotein complex that terminates RNA polymerase II (Pol II) transcription in the promoter-proximal region of genes. The integrator complex provides a quality checkpoint during transcription elongation by driving premature transcription termination of transcripts that are unfavorably configured for transcriptional elongation: the complex terminates transcription by (1) catalyzing dephosphorylation of the C-terminal domain (CTD) of Pol II subunit Polr2A/Rbp1 and Spt5, and (2) degrading the exiting nascent RNA transcript via endonuclease activity. The integrator complex is also involved in the 3'-end processing of the U7 snRNA, and also the spliceosomal snRNAs U1, U2, U4 and U5. This Drosophila persimilis (Fruit fly) protein is Protein asunder (asun).